Reading from the N-terminus, the 441-residue chain is UDP-N-acetylglucosamine--N-acetylmuramyl-(pentapeptide) pyrophosphoryl-undecaprenol N-acetylglucosamine transferase (441 aa).

UDP-N-acetyl-alpha-D-glucosamine-binding positions include 28-30 (TGG), asparagine 140, arginine 176, serine 204, isoleucine 257, and glutamine 302.

Belongs to the glycosyltransferase 28 family. MurG subfamily.

The protein resides in the cell inner membrane. It carries out the reaction di-trans,octa-cis-undecaprenyl diphospho-N-acetyl-alpha-D-muramoyl-L-alanyl-D-glutamyl-meso-2,6-diaminopimeloyl-D-alanyl-D-alanine + UDP-N-acetyl-alpha-D-glucosamine = di-trans,octa-cis-undecaprenyl diphospho-[N-acetyl-alpha-D-glucosaminyl-(1-&gt;4)]-N-acetyl-alpha-D-muramoyl-L-alanyl-D-glutamyl-meso-2,6-diaminopimeloyl-D-alanyl-D-alanine + UDP + H(+). It participates in cell wall biogenesis; peptidoglycan biosynthesis. Functionally, cell wall formation. Catalyzes the transfer of a GlcNAc subunit on undecaprenyl-pyrophosphoryl-MurNAc-pentapeptide (lipid intermediate I) to form undecaprenyl-pyrophosphoryl-MurNAc-(pentapeptide)GlcNAc (lipid intermediate II). This Xanthomonas oryzae pv. oryzae (strain MAFF 311018) protein is UDP-N-acetylglucosamine--N-acetylmuramyl-(pentapeptide) pyrophosphoryl-undecaprenol N-acetylglucosamine transferase.